The following is a 140-amino-acid chain: MAIHYETKATNVGGRKGHVYTDDRALDIDIVPPAQADGKATNPEQLFAAGYASCFNGAFDLILKQNKVRDAHPEVTLTVRLEDDPDSESPKLSVSIDATIKNVISQEEAEKYLQMAHEFCPYSKATQGNINVDLNVNVVD.

It belongs to the OsmC/Ohr family.

This Staphylococcus aureus (strain MRSA252) protein is Organic hydroperoxide resistance protein-like.